We begin with the raw amino-acid sequence, 432 residues long: Glutamate-1-semialdehyde 2,1-aminomutase 2 (432 aa).

At Lys-268 the chain carries N6-(pyridoxal phosphate)lysine.

This sequence belongs to the class-III pyridoxal-phosphate-dependent aminotransferase family. HemL subfamily. In terms of assembly, homodimer. Requires pyridoxal 5'-phosphate as cofactor.

The protein localises to the cytoplasm. It carries out the reaction (S)-4-amino-5-oxopentanoate = 5-aminolevulinate. It functions in the pathway porphyrin-containing compound metabolism; protoporphyrin-IX biosynthesis; 5-aminolevulinate from L-glutamyl-tRNA(Glu): step 2/2. The polypeptide is Glutamate-1-semialdehyde 2,1-aminomutase 2 (Listeria monocytogenes serotype 4b (strain CLIP80459)).